A 550-amino-acid polypeptide reads, in one-letter code: Chaperonin GroEL (550 aa).

ATP is bound by residues 30 to 33 (TLGP), K51, 87 to 91 (DGTTT), G415, and D496. Residues 526 to 550 (PEDEKMPPMPPGGGMGGMGGMGGMY) are disordered. Residues 537 to 550 (GGGMGGMGGMGGMY) are compositionally biased toward gly residues.

The protein belongs to the chaperonin (HSP60) family. In terms of assembly, forms a cylinder of 14 subunits composed of two heptameric rings stacked back-to-back. Interacts with the co-chaperonin GroES.

The protein resides in the cytoplasm. It catalyses the reaction ATP + H2O + a folded polypeptide = ADP + phosphate + an unfolded polypeptide.. In terms of biological role, together with its co-chaperonin GroES, plays an essential role in assisting protein folding. The GroEL-GroES system forms a nano-cage that allows encapsulation of the non-native substrate proteins and provides a physical environment optimized to promote and accelerate protein folding. This Chloroherpeton thalassium (strain ATCC 35110 / GB-78) protein is Chaperonin GroEL.